Here is a 150-residue protein sequence, read N- to C-terminus: Protein-export protein SecB (150 aa).

It belongs to the SecB family. In terms of assembly, homotetramer, a dimer of dimers. One homotetramer interacts with 1 SecA dimer.

The protein resides in the cytoplasm. Functionally, one of the proteins required for the normal export of preproteins out of the cell cytoplasm. It is a molecular chaperone that binds to a subset of precursor proteins, maintaining them in a translocation-competent state. It also specifically binds to its receptor SecA. This is Protein-export protein SecB from Psychrobacter cryohalolentis (strain ATCC BAA-1226 / DSM 17306 / VKM B-2378 / K5).